A 286-amino-acid polypeptide reads, in one-letter code: Bifunctional protein FolD (286 aa).

Residues 166–168 and isoleucine 232 each bind NADP(+); that span reads GAS.

Belongs to the tetrahydrofolate dehydrogenase/cyclohydrolase family. In terms of assembly, homodimer.

The enzyme catalyses (6R)-5,10-methylene-5,6,7,8-tetrahydrofolate + NADP(+) = (6R)-5,10-methenyltetrahydrofolate + NADPH. It carries out the reaction (6R)-5,10-methenyltetrahydrofolate + H2O = (6R)-10-formyltetrahydrofolate + H(+). The protein operates within one-carbon metabolism; tetrahydrofolate interconversion. Its function is as follows. Catalyzes the oxidation of 5,10-methylenetetrahydrofolate to 5,10-methenyltetrahydrofolate and then the hydrolysis of 5,10-methenyltetrahydrofolate to 10-formyltetrahydrofolate. The protein is Bifunctional protein FolD of Shewanella woodyi (strain ATCC 51908 / MS32).